The sequence spans 586 residues: Malonate--CoA ligase ACSF3, mitochondrial (586 aa).

The transit peptide at 1–89 (MPLPYVGMAL…SREICQLRAC (89 aa)) directs the protein to the mitochondrion. ATP contacts are provided by residues 203–211 (TSGTTGRPK), Asp457, Arg471, and Lys563.

This sequence belongs to the ATP-dependent AMP-binding enzyme family.

It localises to the mitochondrion. The enzyme catalyses tetracosanoate + ATP + CoA = tetracosanoyl-CoA + AMP + diphosphate. It carries out the reaction malonate + ATP + CoA = malonyl-CoA + AMP + diphosphate. Its function is as follows. Catalyzes the initial reaction in intramitochondrial fatty acid synthesis, by activating malonate and methylmalonate, but not acetate, into their respective CoA thioester. May have some preference toward very-long-chain substrates. The protein is Malonate--CoA ligase ACSF3, mitochondrial of Bos taurus (Bovine).